Consider the following 157-residue polypeptide: Ubiquitin-like protein 4A (157 aa).

The Ubiquitin-like domain maps to 1-76 (MQLTVKALQG…LNLVVKPLEK (76 aa)). K48 is covalently cross-linked (Glycyl lysine isopeptide (Lys-Gly) (interchain with G-Cter in ubiquitin)). Phosphoserine is present on S90. The tract at residues 96-138 (WQLISKVLARHFSVADASRVLEQLQRDYDRSLSRLTLDDIERL) is required and sufficient for interaction with BAG6.

In terms of assembly, component of the BAG6/BAT3 complex, at least composed of BAG6, UBL4A and GET4/TRC35. Interacts with BAG6; the interaction is direct and required for UBL4A protein stability. Interacts with USP13; may be indirect via BAG6. Post-translationally, polyubiquitinated. Ubiquitination by AMFR and deubiquitination by USP13 may regulate the interaction between the BAG6/BAT3 complex and SGTA and therefore may regulate client proteins fate.

The protein resides in the cytoplasm. Its subcellular location is the cytosol. The protein localises to the nucleus. Functionally, as part of a cytosolic protein quality control complex, the BAG6/BAT3 complex, maintains misfolded and hydrophobic patches-containing proteins in a soluble state and participates in their proper delivery to the endoplasmic reticulum or alternatively can promote their sorting to the proteasome where they undergo degradation. The BAG6/BAT3 complex is involved in the post-translational delivery of tail-anchored/type II transmembrane proteins to the endoplasmic reticulum membrane. Recruited to ribosomes, it interacts with the transmembrane region of newly synthesized tail-anchored proteins and together with SGTA and ASNA1 mediates their delivery to the endoplasmic reticulum. Client proteins that cannot be properly delivered to the endoplasmic reticulum are ubiquitinated and sorted to the proteasome. Similarly, the BAG6/BAT3 complex also functions as a sorting platform for proteins of the secretory pathway that are mislocalized to the cytosol either delivering them to the proteasome for degradation or to the endoplasmic reticulum. The BAG6/BAT3 complex also plays a role in the endoplasmic reticulum-associated degradation (ERAD), a quality control mechanism that eliminates unwanted proteins of the endoplasmic reticulum through their retrotranslocation to the cytosol and their targeting to the proteasome. It maintains these retrotranslocated proteins in an unfolded yet soluble state condition in the cytosol to ensure their proper delivery to the proteasome. The chain is Ubiquitin-like protein 4A from Mus musculus (Mouse).